The chain runs to 376 residues: 5-hydroxytryptamine receptor 1D (376 aa).

A disordered region spans residues 1–22 (MSPPNQSEEGLPQEASNRSLNA). 3 N-linked (GlcNAc...) asparagine glycosylation sites follow: N5, N17, and N21. A run of 3 helical transmembrane segments spans residues 39–64 (VSLV…TTIL), 76–97 (LIGS…ISIA), and 110–134 (LCDI…VIAL). Cysteines 111 and 188 form a disulfide. The serotonin site is built by D118 and C122. Residues 135–137 (DRY) carry the DRY motif; important for ligand-induced conformation changes motif. A run of 4 helical transmembrane segments spans residues 155-176 (AGAM…PLFW), 195-218 (ISYT…ILYS), 300-325 (KTLG…VLPI), and 335-358 (ALFD…YTVF). Serotonin is bound at residue S320. The short motif at 351-355 (NPIIY) is the NPxxY motif; important for ligand-induced conformation changes and signaling element.

It belongs to the G-protein coupled receptor 1 family. Homodimer. Heterodimer with HTR1B.

It localises to the cell membrane. Functionally, G-protein coupled receptor for 5-hydroxytryptamine (serotonin). Also functions as a receptor for ergot alkaloid derivatives, various anxiolytic and antidepressant drugs and other psychoactive substances. Ligand binding causes a conformation change that triggers signaling via guanine nucleotide-binding proteins (G proteins) and modulates the activity of downstream effectors, such as adenylate cyclase. HTR1D is coupled to G(i)/G(o) G alpha proteins and mediates inhibitory neurotransmission by inhibiting adenylate cyclase activity. Regulates the release of 5-hydroxytryptamine in the brain, and thereby affects neural activity. May also play a role in regulating the release of other neurotransmitters. May play a role in vasoconstriction. The sequence is that of 5-hydroxytryptamine receptor 1D (HTR1D) from Cavia porcellus (Guinea pig).